Here is a 332-residue protein sequence, read N- to C-terminus: Small ribosomal subunit biogenesis GTPase RsgA (332 aa).

Positions 103–259 constitute a CP-type G domain; sequence RQQLIAANLD…LIDTPGMREL (157 aa). GTP is bound by residues 148-151 and 201-209; these read TKVD and GSSGAGKST. Residues Cys281, Cys286, His288, and Cys294 each coordinate Zn(2+).

It belongs to the TRAFAC class YlqF/YawG GTPase family. RsgA subfamily. Monomer. Associates with 30S ribosomal subunit, binds 16S rRNA. It depends on Zn(2+) as a cofactor.

The protein localises to the cytoplasm. Functionally, one of several proteins that assist in the late maturation steps of the functional core of the 30S ribosomal subunit. Helps release RbfA from mature subunits. May play a role in the assembly of ribosomal proteins into the subunit. Circularly permuted GTPase that catalyzes slow GTP hydrolysis, GTPase activity is stimulated by the 30S ribosomal subunit. The chain is Small ribosomal subunit biogenesis GTPase RsgA from Xylella fastidiosa (strain M23).